The chain runs to 112 residues: High mobility group protein D (112 aa).

The HMG box DNA-binding region spans 5-71; it reads PKRPLSAYML…DYDRAVKEFE (67 aa). Residue Ser-10 is modified to Phosphoserine. Tyr-12 carries the phosphotyrosine modification. The segment at 72 to 112 is disordered; that stretch reads ANGGSSAANGGGAKKRAKPAKKVAKKSKKEESDEDDDDESE. Positions 84 to 98 are enriched in basic residues; sequence AKKRAKPAKKVAKKS. Residues Ser-103 and Ser-111 each carry the phosphoserine modification. A compositionally biased stretch (acidic residues) spans 103-112; the sequence is SDEDDDDESE.

It belongs to the HMGB family.

It localises to the nucleus. The protein resides in the chromosome. Functionally, binds preferentially single-stranded DNA and unwinds double-stranded DNA. Prefers sites containing the sequence 5'-ttg-3'. Facilitates DNA bending. Associated with early embryonic chromatin in the absence of histone H1. The chain is High mobility group protein D (HmgD) from Drosophila melanogaster (Fruit fly).